The primary structure comprises 528 residues: Adhesion G-protein coupled receptor G5 (528 aa).

Residues 1–21 (MDHCGALFLCLCLLTLQNATT) form the signal peptide. Topologically, residues 22-245 (ETWEELLSYM…SPALVPAELL (224 aa)) are extracellular. 6 N-linked (GlcNAc...) asparagine glycosylation sites follow: N58, N65, N146, N147, N173, and N179. The GAIN-B domain occupies 78-239 (FKLSCDFSGL…AVLMQLSPAL (162 aa)). Intrachain disulfides connect C189-C221 and C209-C223. The segment at 189-239 (CVFWKEGARKQPWGGWSPEGCRTEQPSHSQVLCRCNHLTYFAVLMQLSPAL) is GPS. Positions 228-236 (YFAVLMQLS) are stachel. A helical transmembrane segment spans residues 246–271 (APLTYISLVGCSISIVASLITVLLHF). The Cytoplasmic segment spans residues 272 to 280 (HFRKQSDSL). Residues 281–304 (TRIHMNLHASVLLLNIAFLLSPAF) form a helical membrane-spanning segment. The Extracellular portion of the chain corresponds to 305–314 (AMSPVPGSAC). An intrachain disulfide couples C314 to C404. Residues 315–340 (TALAAALHYALLSCLTWMAIEGFNLY) form a helical membrane-spanning segment. Topologically, residues 341-353 (LLLGRVYNIYIRR) are cytoplasmic. The helical transmembrane segment at 354–377 (YVFKLGVLGWGAPALLVLLSLSVK) threads the bilayer. The Extracellular portion of the chain corresponds to 378 to 410 (SSVYGPCTIPVFDSWENGTGFQNMSICWVRSPV). 2 N-linked (GlcNAc...) asparagine glycosylation sites follow: N394 and N400. Residues 411–435 (VHSVLVMGYGGLTSLFNLVVLAWAL) form a helical membrane-spanning segment. Over 436–455 (WTLRRLRERADAPSVRACHD) the chain is Cytoplasmic. The helical transmembrane segment at 456-477 (TVTVLGLTVLLGTTWALAFFSF) threads the bilayer. Residues 478 to 481 (GVFL) are Extracellular-facing. A helical membrane pass occupies residues 482 to 505 (LPQLFLFTILNSLYGFFLFLWFCS). Residues 506-528 (QRCRSEAEAKAQIEAFSSSQTTQ) are Cytoplasmic-facing.

The protein belongs to the G-protein coupled receptor 2 family. Adhesion G-protein coupled receptor (ADGR) subfamily. Heterodimer of 2 chains generated by proteolytic processing; the large extracellular N-terminal fragment and the membrane-bound C-terminal fragment predominantly remain associated and non-covalently linked. In terms of processing, autoproteolytically processed at the GPS region of the GAIN-B domain; this cleavage modulates receptor activity. Post-translationally, N-glycsylated. As to expression, expressed in immune cells. Primarily found in granulocytes. Found in eosinophils.

The protein resides in the cell membrane. With respect to regulation, forms a heterodimer of 2 chains generated by proteolytic processing that remain associated through non-covalent interactions mediated by the GAIN-B domain. In the inactivated receptor, the Stachel sequence (also named stalk) is embedded in the GAIN-B domain, where it adopts a beta-strand conformation. On activation, the Stachel moves into the 7 transmembrane region and adopts a twisted hook-shaped configuration that forms contacts within the receptor, leading to coupling of a G-alpha protein, which activates signaling. The cleaved GAIN-B and N-terminal domains can then dissociate from the rest of the receptor. Its function is as follows. Orphan adhesion G-protein coupled receptor (aGPCR). Ligand binding causes a conformation change that triggers signaling via guanine nucleotide-binding proteins (G proteins) and modulates the activity of downstream effectors, such as adenylate cyclase. ADGRG5 is specifically coupled to G(s) G proteins and mediates activation of adenylate cyclase activity. This Homo sapiens (Human) protein is Adhesion G-protein coupled receptor G5.